Reading from the N-terminus, the 336-residue chain is uncharacterized protein (336 aa).

This is an uncharacterized protein from Enterobacteria phage T4 (Bacteriophage T4).